Reading from the N-terminus, the 317-residue chain is tRNA dimethylallyltransferase (317 aa).

ATP is bound at residue 14–21; the sequence is GPTASGKT. 16–21 is a binding site for substrate; it reads TASGKT. Interaction with substrate tRNA regions lie at residues 39–42, 163–167, and 248–253; these read DSAL, QRIQR, and RCVGYR.

This sequence belongs to the IPP transferase family. In terms of assembly, monomer. Mg(2+) is required as a cofactor.

It carries out the reaction adenosine(37) in tRNA + dimethylallyl diphosphate = N(6)-dimethylallyladenosine(37) in tRNA + diphosphate. Catalyzes the transfer of a dimethylallyl group onto the adenine at position 37 in tRNAs that read codons beginning with uridine, leading to the formation of N6-(dimethylallyl)adenosine (i(6)A). The chain is tRNA dimethylallyltransferase from Paraburkholderia phymatum (strain DSM 17167 / CIP 108236 / LMG 21445 / STM815) (Burkholderia phymatum).